The sequence spans 67 residues: DNA-directed RNA polymerase subunit omega (67 aa).

Belongs to the RNA polymerase subunit omega family. In terms of assembly, the RNAP catalytic core consists of 2 alpha, 1 beta, 1 beta' and 1 omega subunit. When a sigma factor is associated with the core the holoenzyme is formed, which can initiate transcription.

It carries out the reaction RNA(n) + a ribonucleoside 5'-triphosphate = RNA(n+1) + diphosphate. Promotes RNA polymerase assembly. Latches the N- and C-terminal regions of the beta' subunit thereby facilitating its interaction with the beta and alpha subunits. The chain is DNA-directed RNA polymerase subunit omega from Nautilia profundicola (strain ATCC BAA-1463 / DSM 18972 / AmH).